We begin with the raw amino-acid sequence, 367 residues long: UDP-N-acetylglucosamine--N-acetylmuramyl-(pentapeptide) pyrophosphoryl-undecaprenol N-acetylglucosamine transferase (367 aa).

UDP-N-acetyl-alpha-D-glucosamine is bound by residues 15 to 17, N127, R163, S191, I249, and Q294; that span reads TGG.

The protein belongs to the glycosyltransferase 28 family. MurG subfamily.

Its subcellular location is the cell inner membrane. It carries out the reaction di-trans,octa-cis-undecaprenyl diphospho-N-acetyl-alpha-D-muramoyl-L-alanyl-D-glutamyl-meso-2,6-diaminopimeloyl-D-alanyl-D-alanine + UDP-N-acetyl-alpha-D-glucosamine = di-trans,octa-cis-undecaprenyl diphospho-[N-acetyl-alpha-D-glucosaminyl-(1-&gt;4)]-N-acetyl-alpha-D-muramoyl-L-alanyl-D-glutamyl-meso-2,6-diaminopimeloyl-D-alanyl-D-alanine + UDP + H(+). Its pathway is cell wall biogenesis; peptidoglycan biosynthesis. Its function is as follows. Cell wall formation. Catalyzes the transfer of a GlcNAc subunit on undecaprenyl-pyrophosphoryl-MurNAc-pentapeptide (lipid intermediate I) to form undecaprenyl-pyrophosphoryl-MurNAc-(pentapeptide)GlcNAc (lipid intermediate II). This Burkholderia thailandensis (strain ATCC 700388 / DSM 13276 / CCUG 48851 / CIP 106301 / E264) protein is UDP-N-acetylglucosamine--N-acetylmuramyl-(pentapeptide) pyrophosphoryl-undecaprenol N-acetylglucosamine transferase.